Consider the following 965-residue polypeptide: 26S proteasome non-ATPase regulatory subunit 1 (965 aa).

8 PC repeats span residues 380–413 (NAVA…EGFG), 418–452 (GAML…EPVR), 454–488 (GACL…VSGE), 489–523 (SAGI…DKTQ), 560–595 (TGIC…DVKR), 630–664 (GAAM…FVRK), 665–706 (GALL…SLVK), and 708–738 (GAII…DMGS). Residues 836–856 (ASASSAAAAPSSSSTSGTAPA) are compositionally biased toward low complexity. 2 disordered regions span residues 836–889 (ASAS…LQNP) and 943–965 (TPAS…INDF). Residues 863–882 (EVDQPGKSKKEKAPEKDTKP) are compositionally biased toward basic and acidic residues.

This sequence belongs to the proteasome subunit S1 family.

Acts as a regulatory subunit of the 26 proteasome which is involved in the ATP-dependent degradation of ubiquitinated proteins. The polypeptide is 26S proteasome non-ATPase regulatory subunit 1 (rpn-2) (Caenorhabditis elegans).